The sequence spans 525 residues: Packaging protein UL32 homolog (525 aa).

Residues 1–12 are compositionally biased toward polar residues; that stretch reads MAHKVTSANEPN. The tract at residues 1–20 is disordered; it reads MAHKVTSANEPNPLTGKRLS. 12 residues coordinate Zn(2+): Cys95, Cys98, His173, Cys179, Cys255, Cys256, Cys357, Cys360, His427, Cys434, Cys473, and His510. Zinc finger stretches follow at residues 95-179, 255-510, and 357-434; these read CRVC…ICRC, CCHL…LRIH, and CPLC…DPLC.

Belongs to the herpesviridae UL32 protein family.

The protein localises to the host cytoplasm. The protein resides in the host nucleus. Functionally, plays a role in efficient localization of neo-synthesized capsids to nuclear replication compartments, thereby controlling cleavage and packaging of virus genomic DNA. In Epstein-Barr virus (strain B95-8) (HHV-4), this protein is Packaging protein UL32 homolog.